The primary structure comprises 180 residues: MELIYGSTMRKKWIEPALRFLPVGLCISALALMLKSKEGNENGILEYKHVGAFRYLAYANGICAAYSVLSTFNSVVPRSCSLSRAWFVFVFDQAFTYLMLGAGAVVTEVLYLAYKGDEKITWFEICPYYGRFCNRVAASLVISFLALLCFIPLSLISAYRVFSKYDPPSLCKKDQITSQS.

At 1-13 (MELIYGSTMRKKW) the chain is on the cytoplasmic side. The chain crosses the membrane as a helical span at residues 14-34 (IEPALRFLPVGLCISALALML). Topologically, residues 35–55 (KSKEGNENGILEYKHVGAFRY) are extracellular. The helical transmembrane segment at 56–76 (LAYANGICAAYSVLSTFNSVV) threads the bilayer. Over 77–85 (PRSCSLSRA) the chain is Cytoplasmic. Residues 86–106 (WFVFVFDQAFTYLMLGAGAVV) form a helical membrane-spanning segment. Topologically, residues 107-135 (TEVLYLAYKGDEKITWFEICPYYGRFCNR) are extracellular. Residues 136 to 156 (VAASLVISFLALLCFIPLSLI) form a helical membrane-spanning segment. The Cytoplasmic portion of the chain corresponds to 157–180 (SAYRVFSKYDPPSLCKKDQITSQS).

This sequence belongs to the Casparian strip membrane proteins (CASP) family. In terms of assembly, homodimer and heterodimers.

It is found in the cell membrane. The sequence is that of CASP-like protein 2A3 from Picea sitchensis (Sitka spruce).